A 429-amino-acid chain; its full sequence is MAKDILKNQDPKLQAMIVEHSAPAPKEIPMDAPVLKRVARPLRHVKFIPIKSLIFHTKTGPMDFSYEKKIKTPIPKNKIVVRVSNVGLNPVDMKIRNGYTSSIYGEIGLGREYSGVITEVGENLNYAWHVGDEVYGIYYHPHLAVGCLQSSILVDPKVDPILLRPESVSAEEAAGSLFCLATGYNILNKLSKNKYLKQDSNVLINGGTSSVGMFVIQLLKRHYKLQKKLVIVTSANGPQVLQEKFPDLADEMIFIDYLTCRGKSSKPLRKMLEEKKISQYDPVEDKETILNYNEGKFDVVLDFVGGYDILSHSSSLIHGGGAYVTTVGDYVANYKEDIFDSWDNPSANARKMFGSIIWSYNYTHYYFDPNAKTASANNDWIEQCGDFLKNGTVKCVVDKVYDWKDHKEAFSYMATQRAQGKLIMNVEKF.

As to quaternary structure, interacts with PMA1.

It localises to the cell membrane. The protein localises to the membrane raft. It is found in the golgi apparatus membrane. Its subcellular location is the late endosome membrane. In terms of biological role, lipid raft-associated protein involved in the targeting of PMA1 from Golgi to the plasma membrane. May induce clustering of PMA1, which facilitates partition of PMA1 into lipid rafts after leaving the ER and its transport to the cell surface. In Saccharomyces cerevisiae (strain ATCC 204508 / S288c) (Baker's yeast), this protein is Protein AST1.